The primary structure comprises 336 residues: Glyceraldehyde-3-phosphate dehydrogenase (336 aa).

Residues 12–13 (RI), Asp-34, and Arg-79 each bind NAD(+). D-glyceraldehyde 3-phosphate is bound by residues 150–152 (SCT), Thr-181, 210–211 (TG), and Arg-233. Cys-151 serves as the catalytic Nucleophile. Asn-315 lines the NAD(+) pocket.

Belongs to the glyceraldehyde-3-phosphate dehydrogenase family. As to quaternary structure, homotetramer.

Its subcellular location is the cytoplasm. The enzyme catalyses D-glyceraldehyde 3-phosphate + phosphate + NAD(+) = (2R)-3-phospho-glyceroyl phosphate + NADH + H(+). The protein operates within carbohydrate degradation; glycolysis; pyruvate from D-glyceraldehyde 3-phosphate: step 1/5. This Aspergillus niger protein is Glyceraldehyde-3-phosphate dehydrogenase (gpdA).